We begin with the raw amino-acid sequence, 392 residues long: Selenide, water dikinase 1 (392 aa).

Residue Cys-31 is part of the active site. ATP-binding positions include Lys-32, 67–69, Asp-87, Asp-110, and 161–164; these read GMD and GGQT. A Mg(2+)-binding site is contributed by Asp-69. Asp-110 serves as a coordination point for Mg(2+). Mg(2+) is bound at residue Asp-265. Residue Thr-387 is modified to Phosphothreonine.

Belongs to the selenophosphate synthase 1 family. Class II subfamily. In terms of assembly, homodimer. It depends on Mg(2+) as a cofactor.

It is found in the cell membrane. It localises to the nucleus membrane. The enzyme catalyses hydrogenselenide + ATP + H2O = selenophosphate + AMP + phosphate + 2 H(+). Its function is as follows. Synthesizes selenophosphate from selenide and ATP. The polypeptide is Selenide, water dikinase 1 (sephs1) (Danio rerio (Zebrafish)).